A 423-amino-acid polypeptide reads, in one-letter code: Gamma-glutamyl phosphate reductase (423 aa).

The protein belongs to the gamma-glutamyl phosphate reductase family.

The protein localises to the cytoplasm. It catalyses the reaction L-glutamate 5-semialdehyde + phosphate + NADP(+) = L-glutamyl 5-phosphate + NADPH + H(+). It functions in the pathway amino-acid biosynthesis; L-proline biosynthesis; L-glutamate 5-semialdehyde from L-glutamate: step 2/2. Its function is as follows. Catalyzes the NADPH-dependent reduction of L-glutamate 5-phosphate into L-glutamate 5-semialdehyde and phosphate. The product spontaneously undergoes cyclization to form 1-pyrroline-5-carboxylate. The sequence is that of Gamma-glutamyl phosphate reductase from Paraburkholderia phytofirmans (strain DSM 17436 / LMG 22146 / PsJN) (Burkholderia phytofirmans).